The chain runs to 251 residues: ATP synthase subunit a (251 aa).

Helical transmembrane passes span 28 to 48 (FTQS…IIAL), 63 to 80 (LVEI…EQIG), 86 to 106 (FFPF…LGLF), 115 to 135 (HVAV…AVAL), 154 to 176 (ALAP…SLSI), 195 to 215 (FMFL…LLPM), and 219 to 239 (VTLV…FAIL).

The protein belongs to the ATPase A chain family. As to quaternary structure, F-type ATPases have 2 components, CF(1) - the catalytic core - and CF(0) - the membrane proton channel. CF(1) has five subunits: alpha(3), beta(3), gamma(1), delta(1), epsilon(1). CF(0) has three main subunits: a(1), b(2) and c(9-12). The alpha and beta chains form an alternating ring which encloses part of the gamma chain. CF(1) is attached to CF(0) by a central stalk formed by the gamma and epsilon chains, while a peripheral stalk is formed by the delta and b chains.

Its subcellular location is the cell inner membrane. Key component of the proton channel; it plays a direct role in the translocation of protons across the membrane. This chain is ATP synthase subunit a, found in Granulibacter bethesdensis (strain ATCC BAA-1260 / CGDNIH1).